The following is a 106-amino-acid chain: Large ribosomal subunit protein bL21 (106 aa).

Belongs to the bacterial ribosomal protein bL21 family. As to quaternary structure, part of the 50S ribosomal subunit. Contacts protein L20.

This protein binds to 23S rRNA in the presence of protein L20. The chain is Large ribosomal subunit protein bL21 from Streptomyces griseus subsp. griseus (strain JCM 4626 / CBS 651.72 / NBRC 13350 / KCC S-0626 / ISP 5235).